A 375-amino-acid chain; its full sequence is 23S rRNA (uracil(747)-C(5))-methyltransferase RlmC (375 aa).

[4Fe-4S] cluster contacts are provided by Cys-3, Cys-11, Cys-14, and Cys-87. The S-adenosyl-L-methionine site is built by Gln-212, Phe-241, Glu-262, and Asn-307. Catalysis depends on Cys-334, which acts as the Nucleophile.

This sequence belongs to the class I-like SAM-binding methyltransferase superfamily. RNA M5U methyltransferase family. RlmC subfamily.

The enzyme catalyses uridine(747) in 23S rRNA + S-adenosyl-L-methionine = 5-methyluridine(747) in 23S rRNA + S-adenosyl-L-homocysteine + H(+). Functionally, catalyzes the formation of 5-methyl-uridine at position 747 (m5U747) in 23S rRNA. The polypeptide is 23S rRNA (uracil(747)-C(5))-methyltransferase RlmC (Shigella flexneri serotype 5b (strain 8401)).